The sequence spans 203 residues: FMN-dependent NADH:quinone oxidoreductase (203 aa).

Residues Ser-9 and 15–17 (SKS) each bind FMN.

The protein belongs to the azoreductase type 1 family. As to quaternary structure, homodimer. The cofactor is FMN.

It catalyses the reaction 2 a quinone + NADH + H(+) = 2 a 1,4-benzosemiquinone + NAD(+). The enzyme catalyses N,N-dimethyl-1,4-phenylenediamine + anthranilate + 2 NAD(+) = 2-(4-dimethylaminophenyl)diazenylbenzoate + 2 NADH + 2 H(+). In terms of biological role, quinone reductase that provides resistance to thiol-specific stress caused by electrophilic quinones. Functionally, also exhibits azoreductase activity. Catalyzes the reductive cleavage of the azo bond in aromatic azo compounds to the corresponding amines. The chain is FMN-dependent NADH:quinone oxidoreductase from Bordetella avium (strain 197N).